The chain runs to 364 residues: NF-kappa-B inhibitor epsilon (364 aa).

The interval 1–108 is disordered; sequence MSDARKGPDE…GSPLPPAGVL (108 aa). S18 carries the phosphoserine modification. The segment covering 36–48 has biased composition (low complexity); that stretch reads PGSGSSQSGCPQP. A compositionally biased stretch (basic and acidic residues) spans 51–70; sequence HAPETHKEPEKEDADGERAD. Residues 93–104 are compositionally biased toward pro residues; the sequence is PSPPAPGSPLPP. ANK repeat units lie at residues 122-155, 157-186, 190-219, 233-262, 267-296, and 300-329; these read DGDTLLHLAVIHEAPSVLFCCLAFLPQEVLDIQN, LYQTALHLAVHLDQPDVVRALVLKGASRIL, HGDTALHVACRRQNLACACCLLEEQPEPGR, QGLACLHIATLQRNQPLIELLLQNGADIDV, SGKTALHLAVETQERSLVQFLLQAGARVDA, and NGCTPLHLAAGRGLNSISSTLCEAGADSLL.

This sequence belongs to the NF-kappa-B inhibitor family. As to quaternary structure, interacts with RELA, REL, NFKB1 nuclear factor NF-kappa-B p50 subunit and NFKB2 nuclear factor NF-kappa-B p52 subunit. Interacts with HNRNPA2B1; the interaction may be mediated by the RRM2 domain of HNRNPA2B1, and HNRNPA2B1 may interact simultaneously with FAM76B and either NFKBIA or NFKBIE to form a complex. In terms of processing, serine phosphorylated; followed by proteasome-dependent degradation.

The protein resides in the cytoplasm. In terms of biological role, sequesters NF-kappa-B transcription factor complexes in the cytoplasm, thereby inhibiting their activity. Sequestered complexes include NFKB1/p50-RELA/p65 and NFKB1/p50-REL/c-Rel complexes. Limits B-cell activation in response to pathogens, and also plays an important role in B-cell development. In Mus musculus (Mouse), this protein is NF-kappa-B inhibitor epsilon (Nfkbie).